The sequence spans 479 residues: Cyclin-dependent kinase F-1 (479 aa).

Residues 24–419 enclose the Protein kinase domain; the sequence is YEVLGRAGSG…AADLLNDPYF (396 aa). ATP-binding positions include 30-38 and Lys-53; that span reads AGSGAYADV. The active-site Proton acceptor is the Asp-146. Thr-291 carries the post-translational modification Phosphothreonine. The disordered stretch occupies residues 429–479; that stretch reads EGLQVPESKDEDDDSTEEWANFRGGDSDSDFDEFGSMDVTKTDKGFSIRFS. Over residues 468–479 the composition is skewed to basic and acidic residues; sequence TKTDKGFSIRFS.

Belongs to the protein kinase superfamily. CMGC Ser/Thr protein kinase family. CDC2/CDKX subfamily.

The enzyme catalyses L-seryl-[protein] + ATP = O-phospho-L-seryl-[protein] + ADP + H(+). The catalysed reaction is L-threonyl-[protein] + ATP = O-phospho-L-threonyl-[protein] + ADP + H(+). It carries out the reaction [DNA-directed RNA polymerase] + ATP = phospho-[DNA-directed RNA polymerase] + ADP + H(+). In Oryza sativa subsp. japonica (Rice), this protein is Cyclin-dependent kinase F-1 (CDKF-1).